We begin with the raw amino-acid sequence, 485 residues long: MTARLDPFVPAASPQAVPTPELTAPSSDAAAKREARRLAHEALLVRAKAIDEAGGADDWVQAQLVSKGLAVEDLDFSSASEKDKKAWKEKKKAEATERRALKRQAHEAWKATHVGHLGAGVHWAEDRLADAFDVPHREERARANGLTELDSAEALAKALGLSVSKLRWFAFHREVDTATHYVSWTIPKRDGSKRTITSPKPELKAAQRWVLSNVVERLPVHGAAHGFVAGRSILTNALAHQGADVVVKVDLKDFFPSVTWRRVKGLLRKGGLREGTSTLLSLLSTEAPREAVQFRGKLLHVAKGPRALPQGAPTSPGITNALCLKLDKRLSALAKRLGFTYTRYADDLTFSWTKAKQPKPRRTQRPPVAVLLSRVQEVVEAEGFRVHPDKTRVARKGTRQRVTGLVVNAAGKDAPAARVPRDVVRQLRAAIHNRKKGKPGREGESLEQLKGMAAFIHMTDPAKGRAFLAQLTELESTASAAPQAE.

The segment at 1–33 (MTARLDPFVPAASPQAVPTPELTAPSSDAAAKR) is disordered. Residues 167–407 (RWFAFHREVD…TRQRVTGLVV (241 aa)) form the Reverse transcriptase domain. Residues D250, D346, and D347 each contribute to the Mg(2+) site.

This sequence belongs to the bacterial reverse transcriptase family.

It carries out the reaction DNA(n) + a 2'-deoxyribonucleoside 5'-triphosphate = DNA(n+1) + diphosphate. With respect to regulation, msDNA synthesis is inhibited by rifampicin and chloramphenicol. Its function is as follows. Reverse transcriptase (RT) responsible for synthesis of msDNA-Mx162 (a branched molecule with RNA linked by a 2',5'-phosphodiester bond to ssDNA). The retron transcript serves as primer (from a conserved internal G residue) and template for the reaction, and codes for the RT. The retron is involved in antiviral defense. The chain is Retron Mx162 reverse transcriptase from Myxococcus xanthus.